The following is a 346-amino-acid chain: N(4)-(beta-N-acetylglucosaminyl)-L-asparaginase (346 aa).

An N-terminal signal peptide occupies residues 1-23; it reads MARKSNLPVLLVPFLLCQALVRC. Position 24 is a blocked amino end (Ser) (Ser24). A glycan (N-linked (GlcNAc...) asparagine) is linked at Asn38. 2 disulfide bridges follow: Cys64/Cys69 and Cys163/Cys179. Thr206 acts as the Nucleophile in catalysis. Residues 234 to 237 and 257 to 260 contribute to the substrate site; these read RVGD and TGNG. A disulfide bridge connects residues Cys286 and Cys306. A glycan (N-linked (GlcNAc...) asparagine) is linked at Asn308. Cys317 and Cys345 are joined by a disulfide.

The protein belongs to the Ntn-hydrolase family. Heterotetramer of two alpha and two beta chains arranged as a dimer of alpha/beta heterodimers. In terms of processing, cleaved into an alpha and beta chain by autocatalysis; this activates the enzyme. The N-terminal residue of the beta subunit is responsible for the nucleophile hydrolase activity. N-glycosylated.

It localises to the lysosome. The catalysed reaction is N(4)-(beta-N-acetyl-D-glucosaminyl)-L-asparagine + H2O = N-acetyl-beta-D-glucosaminylamine + L-aspartate + H(+). In terms of biological role, cleaves the GlcNAc-Asn bond which joins oligosaccharides to the peptide of asparagine-linked glycoproteins. The protein is N(4)-(beta-N-acetylglucosaminyl)-L-asparaginase (AGA) of Homo sapiens (Human).